The following is a 153-amino-acid chain: Ribosome maturation factor RimP (153 aa).

The protein belongs to the RimP family.

The protein resides in the cytoplasm. Functionally, required for maturation of 30S ribosomal subunits. The chain is Ribosome maturation factor RimP from Acidithiobacillus ferrooxidans (strain ATCC 53993 / BNL-5-31) (Leptospirillum ferrooxidans (ATCC 53993)).